The primary structure comprises 634 residues: uncharacterized protein (634 aa).

A signal peptide spans 1–40 (MWLQQRLKGLPGLLSSSWARRLLCLLGLLLLLLWFGGSGA). Residues 41 to 589 (RRAAGGLHLL…DEHMAQQDPG (549 aa)) lie on the Extracellular side of the membrane. Residue Asn363 is glycosylated (N-linked (GlcNAc...) asparagine). The chain crosses the membrane as a helical span at residues 590–610 (LPFLFWFSVASLITLFHLFLF). At 611 to 634 (KLIYNEYCGPGAKPLFRSKEDPSV) the chain is on the cytoplasmic side.

The protein resides in the membrane. This is an uncharacterized protein from Homo sapiens (Human).